A 285-amino-acid chain; its full sequence is Coagulation factor IX (285 aa).

Tyr23 bears the Sulfotyrosine mark. A glycan (N-linked (GlcNAc...) asparagine) is linked at Asn25. Phosphothreonine; alternate is present on Thr27. O-linked (GalNAc...) threonine; alternate glycosylation is present at Thr27. The N-linked (GlcNAc...) asparagine glycan is linked to Asn45. Thr47 carries an O-linked (GalNAc...) threonine glycan. Residues 59-285 enclose the Peptidase S1 domain; that stretch reads VVGGEDAKPG…YTKVSRYVNW (227 aa). Residues Cys84 and Cys100 are joined by a disulfide bond. Catalysis depends on His99, which acts as the Charge relay system. Residues Asn115, Glu120, and Glu123 each coordinate Ca(2+). Residues Asn127 and Asn138 are each glycosylated (N-linked (GlcNAc...) asparagine). Asp147 (charge relay system) is an active-site residue. Disulfide bonds link Cys214-Cys228 and Cys239-Cys267. Residue Ser243 is the Charge relay system of the active site.

The protein belongs to the peptidase S1 family. As to quaternary structure, heterodimer of a light chain and a heavy chain; disulfide-linked. Interacts (inactive and activated) with F11 (activated) in calcium-dependent manner. Interacts with SERPINC1. Post-translationally, activated by factor XIa, which excises the activation peptide. The propeptide can also be removed by snake venom protease. Activated by coagulation factor VIIa-tissue factor (F7-F3) complex in calcium-dependent manner.

Its subcellular location is the secreted. The enzyme catalyses Selective cleavage of Arg-|-Ile bond in factor X to form factor Xa.. Its function is as follows. Factor IX is a vitamin K-dependent plasma protein that participates in the intrinsic pathway of blood coagulation by converting factor X to its active form in the presence of Ca(2+) ions, phospholipids, and factor VIIIa. The sequence is that of Coagulation factor IX (F9) from Cavia porcellus (Guinea pig).